A 325-amino-acid polypeptide reads, in one-letter code: Phospho-N-acetylmuramoyl-pentapeptide-transferase (325 aa).

The next 10 membrane-spanning stretches (helical) occupy residues Val5 to Ile25, Leu57 to Phe77, Val81 to Ile101, Leu117 to Ser137, Ser146 to Ala166, Gly178 to Thr198, Tyr200 to Phe220, Val227 to Met247, Ile252 to Val272, and Val304 to Ile324.

The protein belongs to the glycosyltransferase 4 family. MraY subfamily. Mg(2+) is required as a cofactor.

It localises to the cell membrane. The enzyme catalyses UDP-N-acetyl-alpha-D-muramoyl-L-alanyl-gamma-D-glutamyl-meso-2,6-diaminopimeloyl-D-alanyl-D-alanine + di-trans,octa-cis-undecaprenyl phosphate = di-trans,octa-cis-undecaprenyl diphospho-N-acetyl-alpha-D-muramoyl-L-alanyl-D-glutamyl-meso-2,6-diaminopimeloyl-D-alanyl-D-alanine + UMP. The protein operates within cell wall biogenesis; peptidoglycan biosynthesis. In terms of biological role, catalyzes the initial step of the lipid cycle reactions in the biosynthesis of the cell wall peptidoglycan: transfers peptidoglycan precursor phospho-MurNAc-pentapeptide from UDP-MurNAc-pentapeptide onto the lipid carrier undecaprenyl phosphate, yielding undecaprenyl-pyrophosphoryl-MurNAc-pentapeptide, known as lipid I. This chain is Phospho-N-acetylmuramoyl-pentapeptide-transferase, found in Halalkalibacterium halodurans (strain ATCC BAA-125 / DSM 18197 / FERM 7344 / JCM 9153 / C-125) (Bacillus halodurans).